The primary structure comprises 1195 residues: Error-prone DNA polymerase (1195 aa).

The disordered stretch occupies residues 1163-1195 (ALNGDRRDTPDAPAQRHRHPRDVRILPPSRDFH).

The protein belongs to the DNA polymerase type-C family. DnaE2 subfamily.

The protein resides in the cytoplasm. The enzyme catalyses DNA(n) + a 2'-deoxyribonucleoside 5'-triphosphate = DNA(n+1) + diphosphate. DNA polymerase involved in damage-induced mutagenesis and translesion synthesis (TLS). It is not the major replicative DNA polymerase. This is Error-prone DNA polymerase from Rhodopseudomonas palustris (strain ATCC BAA-98 / CGA009).